A 454-amino-acid chain; its full sequence is Bifunctional protein GlmU (454 aa).

Residues Met1–Lys228 form a pyrophosphorylase region. UDP-N-acetyl-alpha-D-glucosamine contacts are provided by residues Leu8 to Gly11, Lys22, Gln73, Gly78 to Thr79, Tyr100 to Asp102, Gly138, Glu153, Asn168, and Asn226. Mg(2+) is bound at residue Asp102. Mg(2+) is bound at residue Asn226. Residues Ser229–Gln249 are linker. The interval Gly250–Asn454 is N-acetyltransferase. Arg332 and Lys350 together coordinate UDP-N-acetyl-alpha-D-glucosamine. Residue His362 is the Proton acceptor of the active site. Tyr365 and Asn376 together coordinate UDP-N-acetyl-alpha-D-glucosamine. Residues Ala379, Asn385–Tyr386, Ser404, Ala422, and Arg439 contribute to the acetyl-CoA site.

In the N-terminal section; belongs to the N-acetylglucosamine-1-phosphate uridyltransferase family. It in the C-terminal section; belongs to the transferase hexapeptide repeat family. As to quaternary structure, homotrimer. The cofactor is Mg(2+).

It is found in the cytoplasm. It carries out the reaction alpha-D-glucosamine 1-phosphate + acetyl-CoA = N-acetyl-alpha-D-glucosamine 1-phosphate + CoA + H(+). The catalysed reaction is N-acetyl-alpha-D-glucosamine 1-phosphate + UTP + H(+) = UDP-N-acetyl-alpha-D-glucosamine + diphosphate. Its pathway is nucleotide-sugar biosynthesis; UDP-N-acetyl-alpha-D-glucosamine biosynthesis; N-acetyl-alpha-D-glucosamine 1-phosphate from alpha-D-glucosamine 6-phosphate (route II): step 2/2. It participates in nucleotide-sugar biosynthesis; UDP-N-acetyl-alpha-D-glucosamine biosynthesis; UDP-N-acetyl-alpha-D-glucosamine from N-acetyl-alpha-D-glucosamine 1-phosphate: step 1/1. It functions in the pathway bacterial outer membrane biogenesis; LPS lipid A biosynthesis. Its function is as follows. Catalyzes the last two sequential reactions in the de novo biosynthetic pathway for UDP-N-acetylglucosamine (UDP-GlcNAc). The C-terminal domain catalyzes the transfer of acetyl group from acetyl coenzyme A to glucosamine-1-phosphate (GlcN-1-P) to produce N-acetylglucosamine-1-phosphate (GlcNAc-1-P), which is converted into UDP-GlcNAc by the transfer of uridine 5-monophosphate (from uridine 5-triphosphate), a reaction catalyzed by the N-terminal domain. This chain is Bifunctional protein GlmU, found in Hydrogenovibrio crunogenus (strain DSM 25203 / XCL-2) (Thiomicrospira crunogena).